A 123-amino-acid polypeptide reads, in one-letter code: Ribosome-binding factor A (123 aa).

Belongs to the RbfA family. Monomer. Binds 30S ribosomal subunits, but not 50S ribosomal subunits or 70S ribosomes.

It is found in the cytoplasm. In terms of biological role, one of several proteins that assist in the late maturation steps of the functional core of the 30S ribosomal subunit. Associates with free 30S ribosomal subunits (but not with 30S subunits that are part of 70S ribosomes or polysomes). Required for efficient processing of 16S rRNA. May interact with the 5'-terminal helix region of 16S rRNA. The chain is Ribosome-binding factor A from Magnetococcus marinus (strain ATCC BAA-1437 / JCM 17883 / MC-1).